A 94-amino-acid polypeptide reads, in one-letter code: Pyrimidine/purine nucleoside phosphorylase (94 aa).

This sequence belongs to the nucleoside phosphorylase PpnP family.

It carries out the reaction a purine D-ribonucleoside + phosphate = a purine nucleobase + alpha-D-ribose 1-phosphate. The catalysed reaction is adenosine + phosphate = alpha-D-ribose 1-phosphate + adenine. The enzyme catalyses cytidine + phosphate = cytosine + alpha-D-ribose 1-phosphate. It catalyses the reaction guanosine + phosphate = alpha-D-ribose 1-phosphate + guanine. It carries out the reaction inosine + phosphate = alpha-D-ribose 1-phosphate + hypoxanthine. The catalysed reaction is thymidine + phosphate = 2-deoxy-alpha-D-ribose 1-phosphate + thymine. The enzyme catalyses uridine + phosphate = alpha-D-ribose 1-phosphate + uracil. It catalyses the reaction xanthosine + phosphate = alpha-D-ribose 1-phosphate + xanthine. In terms of biological role, catalyzes the phosphorolysis of diverse nucleosides, yielding D-ribose 1-phosphate and the respective free bases. Can use uridine, adenosine, guanosine, cytidine, thymidine, inosine and xanthosine as substrates. Also catalyzes the reverse reactions. This is Pyrimidine/purine nucleoside phosphorylase from Salmonella newport (strain SL254).